Reading from the N-terminus, the 208-residue chain is ATP-dependent Clp protease proteolytic subunit (208 aa).

Ser107 serves as the catalytic Nucleophile. His132 is an active-site residue.

Belongs to the peptidase S14 family. In terms of assembly, fourteen ClpP subunits assemble into 2 heptameric rings which stack back to back to give a disk-like structure with a central cavity, resembling the structure of eukaryotic proteasomes.

The protein localises to the cytoplasm. It carries out the reaction Hydrolysis of proteins to small peptides in the presence of ATP and magnesium. alpha-casein is the usual test substrate. In the absence of ATP, only oligopeptides shorter than five residues are hydrolyzed (such as succinyl-Leu-Tyr-|-NHMec, and Leu-Tyr-Leu-|-Tyr-Trp, in which cleavage of the -Tyr-|-Leu- and -Tyr-|-Trp bonds also occurs).. Functionally, cleaves peptides in various proteins in a process that requires ATP hydrolysis. Has a chymotrypsin-like activity. Plays a major role in the degradation of misfolded proteins. The chain is ATP-dependent Clp protease proteolytic subunit from Jannaschia sp. (strain CCS1).